The sequence spans 366 residues: uncharacterized protein (366 aa).

To B.subtilis XkdV.

This is an uncharacterized protein from Bacillus subtilis (strain 168).